The chain runs to 284 residues: Polyamine aminopropyltransferase (284 aa).

The PABS domain occupies glutamate 2–lysine 237. Glutamine 31 provides a ligand contact to S-methyl-5'-thioadenosine. Positions 62 and 86 each coordinate spermidine. Residues glutamate 106 and aspartate 137–glycine 138 each bind S-methyl-5'-thioadenosine. The active-site Proton acceptor is the aspartate 155. Residue aspartate 155 to aspartate 158 participates in spermidine binding. Proline 162 lines the S-methyl-5'-thioadenosine pocket.

Belongs to the spermidine/spermine synthase family. As to quaternary structure, homodimer or homotetramer.

It is found in the cytoplasm. The catalysed reaction is S-adenosyl 3-(methylsulfanyl)propylamine + putrescine = S-methyl-5'-thioadenosine + spermidine + H(+). Its pathway is amine and polyamine biosynthesis; spermidine biosynthesis; spermidine from putrescine: step 1/1. In terms of biological role, catalyzes the irreversible transfer of a propylamine group from the amino donor S-adenosylmethioninamine (decarboxy-AdoMet) to putrescine (1,4-diaminobutane) to yield spermidine. The protein is Polyamine aminopropyltransferase of Alkaliphilus oremlandii (strain OhILAs) (Clostridium oremlandii (strain OhILAs)).